Consider the following 279-residue polypeptide: Tumor necrosis factor ligand superfamily member 6 (279 aa).

Topologically, residues 1-78 are cytoplasmic; the sequence is MQQPMNYPCP…PLKKKDHNTN (78 aa). The interval 30–70 is disordered; sequence FPCPSCGPRGPDQRRPPPPPPPVSPLPPPSQPLPLPPLTPL. Over residues 45 to 68 the composition is skewed to pro residues; sequence PPPPPPPVSPLPPPSQPLPLPPLT. Residues 79–100 form a helical; Signal-anchor for type II membrane protein membrane-spanning segment; the sequence is LWLPVVFFMVLVALVGMGLGMY. Over 101 to 279 the chain is Extracellular; sequence QLFHLQKELA…SKTFFGLYKL (179 aa). Asparagine 117 is a glycosylation site (N-linked (GlcNAc...) asparagine). Polar residues predominate over residues 126–135; it reads EKQIANPSTP. The tract at residues 126–150 is disordered; sequence EKQIANPSTPSEKKEPRSVAHLTGN. Positions 143-279 constitute a THD domain; it reads SVAHLTGNPH…SKTFFGLYKL (137 aa). The N-linked (GlcNAc...) asparagine glycan is linked to asparagine 182. Cysteine 200 and cysteine 231 are disulfide-bonded. Asparagine 248 and asparagine 258 each carry an N-linked (GlcNAc...) asparagine glycan.

The protein belongs to the tumor necrosis factor family. As to quaternary structure, homotrimer. Interacts with ARHGAP9, BAIAP2L1, BTK, CACNB3, CACNB4, CRK, DLG2, DNMBP, DOCK4, EPS8L3, FGR, FYB1, FYN, HCK, ITK, ITSN2, KALRN, LYN, MACC1, MIA, MPP4, MYO15A, NCF1, NCK1, NCK2, NCKIPSD, OSTF1, PIK3R1, PSTPIP1, RIMBP3C, SAMSN1, SH3GL3, SH3PXD2B, SH3PXD2A, SH3RF2, SKAP2, SNX33, SNX9, SORBS3, SPTA1, SRC, SRGAP1, SRGAP2, SRGAP3, TEC, TJP3 and YES1. Post-translationally, the soluble form derives from the membrane form by proteolytic processing. The membrane-bound form undergoes two successive intramembrane proteolytic cleavages. The first one is processed by ADAM10 producing an N-terminal fragment, which lacks the receptor-binding extracellular domain. This ADAM10-processed FasL (FAsL APL) remnant form is still membrane anchored and further processed by SPPL2A that liberates the FasL intracellular domain (FasL ICD). FasL shedding by ADAM10 is a prerequisite for subsequent intramembrane cleavage by SPPL2A in T-cells. Phosphorylated by FGR on tyrosine residues; this is required for ubiquitination and subsequent internalization. In terms of processing, N-glycosylated. Glycosylation enhances apoptotic activity. Post-translationally, monoubiquitinated. Expressed in T-cells. Expressed in natural killer cells.

It localises to the cell membrane. The protein localises to the cytoplasmic vesicle lumen. It is found in the lysosome lumen. Its subcellular location is the secreted. The protein resides in the nucleus. Functionally, cytokine that binds to TNFRSF6/FAS, a receptor that transduces the apoptotic signal into cells. Involved in cytotoxic T-cell-mediated apoptosis, natural killer cell-mediated apoptosis and in T-cell development. Initiates fratricidal/suicidal activation-induced cell death (AICD) in antigen-activated T-cells contributing to the termination of immune responses. TNFRSF6/FAS-mediated apoptosis also has a role in the induction of peripheral tolerance. Binds to TNFRSF6B/DcR3, a decoy receptor that blocks apoptosis. In terms of biological role, induces FAS-mediated activation of NF-kappa-B, initiating non-apoptotic signaling pathways. Can induce apoptosis but does not appear to be essential for this process. Cytoplasmic form induces gene transcription inhibition. This is Tumor necrosis factor ligand superfamily member 6 (Faslg) from Mus musculus (Mouse).